Consider the following 930-residue polypeptide: Probable outer membrane protein pmp8 (930 aa).

A signal peptide spans 1–26; the sequence is MKIPLHKLLISSTLVTPILLSIATYG. The Autotransporter domain occupies 636–930; it reads SIYQQRGLWA…NVDCGLRYSF (295 aa).

It belongs to the PMP outer membrane protein family.

The protein localises to the secreted. It is found in the cell wall. It localises to the cell outer membrane. This Chlamydia pneumoniae (Chlamydophila pneumoniae) protein is Probable outer membrane protein pmp8 (pmp8).